Reading from the N-terminus, the 483-residue chain is Peroxisomal biogenesis factor 3 (483 aa).

Residues 1-14 are Peroxisomal-facing; that stretch reads MTGNRSLVQRHRKK. The helical transmembrane segment at 15–35 threads the bilayer; sequence FVVSSVLFATLFATCAITVYF. Residues 36–483 lie on the Cytoplasmic side of the membrane; that stretch reads SKRWLYKQHL…SACVYSNFGL (448 aa). Disordered stretches follow at residues 119-149 and 230-253; these read GLSS…VSET and NNLP…TRSI. Polar residues predominate over residues 242–253; the sequence is SDGTIDTDTRSI.

Belongs to the peroxin-3 family.

The protein resides in the peroxisome membrane. Involved in peroxisome biosynthesis. In Kluyveromyces lactis (strain ATCC 8585 / CBS 2359 / DSM 70799 / NBRC 1267 / NRRL Y-1140 / WM37) (Yeast), this protein is Peroxisomal biogenesis factor 3 (PEX3).